The primary structure comprises 56 residues: MAKGKGVRIVVTLECKTDQGVYRYHTTKNRRNTPNRIELKKYCPLTQQHEIFKEIK.

Belongs to the bacterial ribosomal protein bL33 family.

The protein localises to the plastid. It localises to the chloroplast. This chain is Large ribosomal subunit protein bL33c (rpl33), found in Guillardia theta (Cryptophyte).